The chain runs to 706 residues: mRNA (2'-O-methyladenosine-N(6)-)-methyltransferase (706 aa).

The segment at 1–34 (MANENHGSPREGASLLSHSPGTSSQSQPCSPKPV) is disordered. A compositionally biased stretch (polar residues) spans 16–29 (LSHSPGTSSQSQPC). Residue serine 30 is modified to Phosphoserine. A WW domain is found at 43 to 77 (ELVHAGWEKCWSRRESRPYYFNRFTNQSLWEMPVL). The tract at residues 88–148 (GLNATPLPQD…QSVPSSPSIP (61 aa)) is disordered. The short motif at 109 to 113 (KSRKR) is the Nuclear localization signal element. Phosphoserine is present on serine 116. Positions 132 to 147 (IPVTPTSQSVPSSPSI) are enriched in low complexity. Position 152 is a phosphothreonine (threonine 152). Residues arginine 234 and arginine 264 each contribute to the substrate site. 552 to 555 (NPPF) contacts S-adenosyl-L-methionine. Substrate contacts are provided by residues glutamate 557 and 587–591 (WREPP). 613 to 615 (FEH) contributes to the S-adenosyl-L-methionine binding site. The tract at residues 663 to 706 (TAAYKQSGRSHGSSSSSSSSSSSSEAKDRDSGREQGPSREPHPT) is disordered. Positions 668-686 (QSGRSHGSSSSSSSSSSSS) match the Nuclear localization signal motif. Over residues 675 to 686 (SSSSSSSSSSSS) the composition is skewed to low complexity. Basic and acidic residues predominate over residues 687–706 (EAKDRDSGREQGPSREPHPT).

The protein belongs to the CAPAM family. Interacts with POLR2A; interacts with the phosphorylated C-terminal domain (CTD) of POLR2A.

The protein resides in the nucleus. The enzyme catalyses a 5'-end (N(7)-methyl 5'-triphosphoguanosine)-(2'-O-methyladenosine) in mRNA + S-adenosyl-L-methionine = a 5'-end (N(7)-methyl 5'-triphosphoguanosine)-(N(6),2'-O-dimethyladenosine) in mRNA + S-adenosyl-L-homocysteine + H(+). Cap-specific adenosine methyltransferase activity is inhibited by zinc. Cap-specific adenosine methyltransferase that catalyzes formation of N(6),2'-O-dimethyladenosine cap (m6A(m)) by methylating the adenosine at the second transcribed position of capped mRNAs. Recruited to the early elongation complex of RNA polymerase II (RNAPII) via interaction with POLR2A and mediates formation of m6A(m) co-transcriptionally. This is mRNA (2'-O-methyladenosine-N(6)-)-methyltransferase from Mus musculus (Mouse).